The following is a 466-amino-acid chain: Keratin, type II cytoskeletal 7 (466 aa).

Ser2 bears the N-acetylserine mark. A phosphoserine mark is found at Ser2 and Ser7. The interval 2–91 (SLHFGSQVFS…DPSIQQVRQE (90 aa)) is head. Ser12 carries O-linked (GlcNAc) serine glycosylation. Residue Arg20 is modified to Dimethylated arginine; alternate. Residue Arg20 is modified to Omega-N-methylarginine; alternate. 3 positions are modified to phosphoserine: Ser54, Ser72, and Ser84. The interval 91-127 (EEREQIKTLNNKFASFIDKVRFLEQQNKLLETKWALL) is coil 1A. An IF rod domain is found at 92–404 (EREQIKTLNN…KLLEGEESRL (313 aa)). Thr98 carries the phosphothreonine modification. A linker 1 region spans residues 128 to 145 (QEQKSAKSNRLPGIFEAQ). Lys131 participates in a covalent cross-link: Glycyl lysine isopeptide (Lys-Gly) (interchain with G-Cter in SUMO2). The coil 1B stretch occupies residues 146 to 237 (IAGLRKQLEA…TLYEQELKEL (92 aa)). An N6-acetyllysine modification is found at Lys180. Residues 238 to 261 (QSEVSDTSVVLSMDNNRSLDLDSI) are linker 12. Ser255 carries the post-translational modification Phosphoserine. The coil 2 stretch occupies residues 262–400 (IAEVKAQYEE…ATYRKLLEGE (139 aa)). Glycyl lysine isopeptide (Lys-Gly) (interchain with G-Cter in SUMO2) cross-links involve residues Lys266 and Lys287. At Thr290 the chain carries Phosphothreonine. Glycyl lysine isopeptide (Lys-Gly) (interchain with G-Cter in SUMO2) cross-links involve residues Lys297 and Lys332. Residues 401–466 (ESRLTGDGVG…TSATSRSPRK (66 aa)) are tail.

This sequence belongs to the intermediate filament family. As to quaternary structure, heterotetramer of two type I and two type II keratins. Interacts with eukaryotic translation initiator factor 3 (eIF3) subunit EIF3S10. Interacts with GPER1. Arg-20 is dimethylated, probably to asymmetric dimethylarginine.

In terms of biological role, blocks interferon-dependent interphase and stimulates DNA synthesis in cells. This Bos taurus (Bovine) protein is Keratin, type II cytoskeletal 7.